Reading from the N-terminus, the 335-residue chain is Glycerol-3-phosphate dehydrogenase [NAD(P)+] (335 aa).

4 residues coordinate NADPH: Ser-10, Phe-11, Arg-31, and Lys-105. Positions 105, 136, and 138 each coordinate sn-glycerol 3-phosphate. Ala-140 is an NADPH binding site. Lys-191, Asp-244, Ser-254, Arg-255, and Asn-256 together coordinate sn-glycerol 3-phosphate. Lys-191 (proton acceptor) is an active-site residue. Arg-255 is a binding site for NADPH. Residues Val-279 and Glu-281 each contribute to the NADPH site.

Belongs to the NAD-dependent glycerol-3-phosphate dehydrogenase family.

It localises to the cytoplasm. The enzyme catalyses sn-glycerol 3-phosphate + NAD(+) = dihydroxyacetone phosphate + NADH + H(+). The catalysed reaction is sn-glycerol 3-phosphate + NADP(+) = dihydroxyacetone phosphate + NADPH + H(+). It participates in membrane lipid metabolism; glycerophospholipid metabolism. In terms of biological role, catalyzes the reduction of the glycolytic intermediate dihydroxyacetone phosphate (DHAP) to sn-glycerol 3-phosphate (G3P), the key precursor for phospholipid synthesis. The polypeptide is Glycerol-3-phosphate dehydrogenase [NAD(P)+] (Leptospira borgpetersenii serovar Hardjo-bovis (strain L550)).